The following is a 383-amino-acid chain: Chorismate synthase (383 aa).

2 residues coordinate NADP(+): Arg-39 and Arg-45. FMN-binding positions include 128 to 130 (RAS), Gly-291, 306 to 310 (KPIAT), and Arg-332.

It belongs to the chorismate synthase family. As to quaternary structure, homotetramer. The cofactor is FMNH2.

The enzyme catalyses 5-O-(1-carboxyvinyl)-3-phosphoshikimate = chorismate + phosphate. It participates in metabolic intermediate biosynthesis; chorismate biosynthesis; chorismate from D-erythrose 4-phosphate and phosphoenolpyruvate: step 7/7. Its function is as follows. Catalyzes the anti-1,4-elimination of the C-3 phosphate and the C-6 proR hydrogen from 5-enolpyruvylshikimate-3-phosphate (EPSP) to yield chorismate, which is the branch point compound that serves as the starting substrate for the three terminal pathways of aromatic amino acid biosynthesis. This reaction introduces a second double bond into the aromatic ring system. This is Chorismate synthase from Thermus thermophilus (strain ATCC BAA-163 / DSM 7039 / HB27).